The following is a 600-amino-acid chain: MPEIRVTPLGAGQDVGRSCILVSIAGKNVMLDCGMHMGFNDDRRFPDFSYITQNGRLTDFLDCVIISHFHLDHCGALPYFSEMVGYDGPIYMTHPTQAICPILLEDYRKIAVDKKGEANFFTSQMIKDCMKKVVAVHLHQTVQVDDELEIKAYYAGHVLGAAMFQIKVGSESVVYTGDYNMTPDRHLGAAWIDKCRPNLLITESTYATTIRDSKRCRERDFLKKVHETVERGGKVLIPVFALGRAQELCILLETFWERMNLKVPIYFSTGLTEKANHYYKLFIPWTNQKIRKTFVQRNMFEFKHIKAFDRAFADNPGPMVVFATPGMLHAGQSLQIFRKWAGNEKNMVIMPGYCVQGTVGHKILSGQRKLEMEGRQVLEVKMQVEYMSFSAHADAKGIMQLVGQAEPESVLLVHGEAKKMEFLKQKIEQELRVSCYMPANGETVTLPTSPSIPVGISLGLLKREMAQGLLPEAKKPRLLHGTLIMKDSNFRLVSSEQALKELGLAEHQLRFTCRVHLHDTRKEQETALRVYSHLKSILKDHCVQHLPDGSVTVESILIQAAAPSEDPGTKVLLVSWTYQDEELGSFLTSLLKKGLPQAPS.

Residues histidine 68, histidine 70, aspartate 72, histidine 73, histidine 157, and aspartate 178 each coordinate Zn(2+). Residues 68 to 73 carry the HXHXDH motif motif; it reads HFHLDH. Glutamate 203 is a catalytic residue. Lysine 381 participates in a covalent cross-link: Glycyl lysine isopeptide (Lys-Gly) (interchain with G-Cter in SUMO). A Zn(2+)-binding site is contributed by histidine 414. Glycyl lysine isopeptide (Lys-Gly) (interchain with G-Cter in SUMO) cross-links involve residues lysine 462 and lysine 475. The Nuclear localization signal signature appears at 469–479; that stretch reads LLPEAKKPRLL.

It belongs to the metallo-beta-lactamase superfamily. RNA-metabolizing metallo-beta-lactamase-like family. INTS11 subfamily. In terms of assembly, component of the Integrator complex, composed of core subunits INTS1, INTS2, INTS3, INTS4, INTS5, INTS6, INTS7, INTS8, INTS9/RC74, INTS10, INTS11/CPSF3L, INTS12, INTS13, INTS14 and INTS15. The core complex associates with protein phosphatase 2A subunits PPP2CA and PPP2R1A, to form the Integrator-PP2A (INTAC) complex. INTS11 is part of the RNA endonuclease subcomplex, composed of INTS4, INTS9, INTS11 and inositol hexakisphosphate (InsP6). Interacts with WDR73; interaction is required for the assembly of the RNA endonuclease subcomplex in the cytoplasm. Interacts with BRAT1; interaction is required for the assembly of the RNA endonuclease subcomplex and inhibits the endonuclease activity of INTS11 before formation of mature integrator complex. Zn(2+) serves as cofactor. Sumoylated; sumoylation regulates its subcellular location and is required for integrator complex integrity.

Its subcellular location is the nucleus. It localises to the cytoplasm. The RNA endonuclease activity is inhibited by BRAT1 that forms hyrogen bond and hydrophobic interactions with the active site. RNA endonuclease component of the integrator complex, a multiprotein complex that terminates RNA polymerase II (Pol II) transcription in the promoter-proximal region of genes. The integrator complex provides a quality checkpoint during transcription elongation by driving premature transcription termination of transcripts that are unfavorably configured for transcriptional elongation: the complex terminates transcription by (1) catalyzing dephosphorylation of the C-terminal domain (CTD) of Pol II subunit POLR2A/RPB1 and SUPT5H/SPT5, (2) degrading the exiting nascent RNA transcript via endonuclease activity and (3) promoting the release of Pol II from bound DNA. The integrator complex is also involved in terminating the synthesis of non-coding Pol II transcripts, such as enhancer RNAs (eRNAs), small nuclear RNAs (snRNAs), telomerase RNAs and long non-coding RNAs (lncRNAs). Within the integrator complex, INTS11 constitutes the RNA endonuclease subunit that degrades exiting nascent RNA transcripts. Mediates recruitment of cytoplasmic dynein to the nuclear envelope, probably as component of the integrator complex. This Pongo abelii (Sumatran orangutan) protein is Integrator complex subunit 11 (INTS11).